A 277-amino-acid chain; its full sequence is Large ribosomal subunit protein uL2 (277 aa).

3 disordered regions span residues 1–23 (MAIK…DFAE), 36–58 (PLHK…GGGH), and 219–277 (TVRG…RKNK). Positions 8 to 20 (PTSNGRRGMTSSD) are enriched in polar residues. The span at 258 to 277 (KTRKKKNKSDKFIVRRRKNK) shows a compositional bias: basic residues.

It belongs to the universal ribosomal protein uL2 family. As to quaternary structure, part of the 50S ribosomal subunit. Forms a bridge to the 30S subunit in the 70S ribosome.

In terms of biological role, one of the primary rRNA binding proteins. Required for association of the 30S and 50S subunits to form the 70S ribosome, for tRNA binding and peptide bond formation. It has been suggested to have peptidyltransferase activity; this is somewhat controversial. Makes several contacts with the 16S rRNA in the 70S ribosome. This is Large ribosomal subunit protein uL2 from Bacillus licheniformis (strain ATCC 14580 / DSM 13 / JCM 2505 / CCUG 7422 / NBRC 12200 / NCIMB 9375 / NCTC 10341 / NRRL NRS-1264 / Gibson 46).